A 272-amino-acid polypeptide reads, in one-letter code: ATP-dependent Clp protease proteolytic subunit, mitochondrial (272 aa).

The N-terminal 52 residues, 1–52 (MWPRVLLGEARVAVDGCRALLSRLAVHFSPPWTAVSCSPLRRSLHGTATRAF), are a transit peptide targeting the mitochondrion. The active-site Nucleophile is the Ser149. His174 is a catalytic residue. Residue Lys196 is modified to N6-succinyllysine. Lys207 carries the N6-acetyllysine modification. The interval 240-272 (VLVHPPQDGEDEPELVQKETATAPTDPPAPTST) is disordered.

This sequence belongs to the peptidase S14 family. In terms of assembly, fourteen CLPP subunits assemble into 2 heptameric rings which stack back to back to give a disk-like structure with a central cavity. Component of the ClpXP complex formed by the assembly of two CLPP heptameric rings with two CLPX hexameric rings, giving rise to a symmetrical structure with two central CLPP rings flanked by a CLPX ring at either end of the complex. As to expression, detected in liver (at protein level). High levels found in heart, liver and skeletal muscle.

Its subcellular location is the mitochondrion matrix. The enzyme catalyses Hydrolysis of proteins to small peptides in the presence of ATP and magnesium. alpha-casein is the usual test substrate. In the absence of ATP, only oligopeptides shorter than five residues are hydrolyzed (such as succinyl-Leu-Tyr-|-NHMec, and Leu-Tyr-Leu-|-Tyr-Trp, in which cleavage of the -Tyr-|-Leu- and -Tyr-|-Trp bonds also occurs).. In terms of biological role, protease component of the ClpXP complex that cleaves peptides and various proteins in an ATP-dependent process. Has low peptidase activity in the absence of CLPX. The ClpXP complex can degrade CSN1S1, CSN2 and CSN3, as well as synthetic peptides (in vitro) and may be responsible for a fairly general and central housekeeping function rather than for the degradation of specific substrates. Cleaves PINK1 in the mitochondrion. This is ATP-dependent Clp protease proteolytic subunit, mitochondrial from Mus musculus (Mouse).